Consider the following 87-residue polypeptide: Translation initiation factor IF-1 1 (87 aa).

The S1-like domain occupies 1 to 72 (MAKEELLELD…TKGRINFRHK (72 aa)). Residues 68-87 (NFRHKDANSPRPPRTGQPRR) are disordered. Pro residues predominate over residues 77-87 (PRPPRTGQPRR).

It belongs to the IF-1 family. Component of the 30S ribosomal translation pre-initiation complex which assembles on the 30S ribosome in the order IF-2 and IF-3, IF-1 and N-formylmethionyl-tRNA(fMet); mRNA recruitment can occur at any time during PIC assembly.

The protein resides in the cytoplasm. One of the essential components for the initiation of protein synthesis. Stabilizes the binding of IF-2 and IF-3 on the 30S subunit to which N-formylmethionyl-tRNA(fMet) subsequently binds. Helps modulate mRNA selection, yielding the 30S pre-initiation complex (PIC). Upon addition of the 50S ribosomal subunit IF-1, IF-2 and IF-3 are released leaving the mature 70S translation initiation complex. This is Translation initiation factor IF-1 1 from Burkholderia lata (strain ATCC 17760 / DSM 23089 / LMG 22485 / NCIMB 9086 / R18194 / 383).